Here is a 475-residue protein sequence, read N- to C-terminus: Equilibrative nucleoside transporter 3 (475 aa).

Topologically, residues 1–51 (MAFASEDNVYHSSNAVYRAPSNHQEADQEALLGKLLDYPAPGLQRPEDRFN) are cytoplasmic. Ser-21 is modified (phosphoserine). A Dileucine internalization motif motif is present at residues 31-32 (LL). The helical transmembrane segment at 52–72 (GAYIIFFCLGIGGLLPWNFFV) threads the bilayer. The Extracellular portion of the chain corresponds to 73-105 (TAKEYWAYKLRNCSSPASGEDPEDMDILNYFES). The N-linked (GlcNAc...) asparagine glycan is linked to Asn-84. Residues 106–126 (YLAVASTVPSLLFLVANFLLV) traverse the membrane as a helical segment. Topologically, residues 127-134 (NRVQVHVR) are cytoplasmic. A helical transmembrane segment spans residues 135-155 (VLASLSVSLAIFVVMIVLVKV). Residues 156–162 (DTSSWTR) are Extracellular-facing. The chain crosses the membrane as a helical span at residues 163–183 (GFFSLTIACMAIISSSSTIFN). Residues 184–199 (SSVYGLTGSFPMRNAQ) are Cytoplasmic-facing. The chain crosses the membrane as a helical span at residues 200–220 (ALISGGAMGGTVSAVALLVDL). Topologically, residues 221–230 (AASSDVRDST) are extracellular. A helical transmembrane segment spans residues 231–251 (LAFFLMAAVFLGLCMGLYLLL). The Cytoplasmic portion of the chain corresponds to 252–305 (SQLEYARYYMRPVAPVRVFSGEDNPSQDAPSASSVAPASRVMHTPPLGPILKKT). A helical transmembrane segment spans residues 306 to 326 (ASLGFCAVSLYFVTAFIIPAI). Topologically, residues 327–340 (STNIQSMHKGTGSP) are extracellular. Residues 341 to 361 (WTSKFFVPLTVFLLFNFADLC) form a helical membrane-spanning segment. Topologically, residues 362–377 (GRQVTAWIQVPGPRSK) are cytoplasmic. A helical transmembrane segment spans residues 378-398 (LLPGLVVSRFCLVPLFLLCNY). Residues 399–415 (QPRSHLTKVLFQSDIYP) lie on the Extracellular side of the membrane. Residues 416–436 (VLFTCLLGLSNGYLSTLVLIY) form a helical membrane-spanning segment. Over 437–450 (GPKIVPRELAEATS) the chain is Cytoplasmic. A helical membrane pass occupies residues 451 to 471 (VVMLFYMSVGLMLGSACAALL). Topologically, residues 472–475 (EHFI) are extracellular.

It belongs to the SLC29A/ENT transporter (TC 2.A.57) family. In terms of tissue distribution, expressed in macrophages.

It is found in the lysosome membrane. The protein resides in the late endosome membrane. The protein localises to the mitochondrion membrane. It localises to the cell membrane. It carries out the reaction adenosine(in) = adenosine(out). The catalysed reaction is guanosine(in) = guanosine(out). It catalyses the reaction inosine(in) = inosine(out). The enzyme catalyses uridine(out) = uridine(in). It carries out the reaction cytidine(in) = cytidine(out). The catalysed reaction is thymidine(in) = thymidine(out). It catalyses the reaction 2'-deoxyadenosine(in) = 2'-deoxyadenosine(out). The enzyme catalyses 2'-deoxycytidine(in) = 2'-deoxycytidine(out). It carries out the reaction guanine(out) = guanine(in). The catalysed reaction is uracil(in) = uracil(out). It catalyses the reaction (R)-noradrenaline(out) = (R)-noradrenaline(in). The enzyme catalyses dopamine(out) = dopamine(in). It carries out the reaction serotonin(out) = serotonin(in). The catalysed reaction is tyramine(in) = tyramine(out). It catalyses the reaction ATP(in) = ATP(out). Its function is as follows. Uniporter that mediates the facilitative transport of nucleoside across lysosomal and mitochondrial membranes. Functions as a non-electrogenic Na(+)-independent transporter. Substrate transport is pH-dependent and enhanced under acidic condition, probably reflecting the location of the transporter in acidic intracellular compartments. Proton is not a cotransporting ion but most likely change the ionization state of the transporter which dictates transport-permissible/impermissible conformation for nucleoside translocation. May direct the nucleoside transport from lysosomes to cytosol or cytosol to mitochondria to facilitate the fundamental function of salvage synthesis of nucleic acids. Involved in the transport of nucleosides (adenosine, guanosine, uridine, thymidine, cytidine and inosine) and deoxynucleosides (deoxyadenosine, deoxycytidine). Also mediates transport of purine nucleobases (adenine, guanine), and pyrimidine nucleobases (uracil). Also able to transport monoamine neurotransmitters dopamine, serotonin, noradrenaline and tyramine. Capable of transporting ATP. Mediates nucleoside export from lysosomes in macrophages, which regulates macrophage functions and numbers. The protein is Equilibrative nucleoside transporter 3 of Mus musculus (Mouse).